The chain runs to 860 residues: Alanine--tRNA ligase (860 aa).

Positions 563, 567, 665, and 669 each coordinate Zn(2+). The disordered stretch occupies residues 824-843; the sequence is VGGKGGGRPDMAQAGGTDSS.

It belongs to the class-II aminoacyl-tRNA synthetase family. Requires Zn(2+) as cofactor.

The protein localises to the cytoplasm. The enzyme catalyses tRNA(Ala) + L-alanine + ATP = L-alanyl-tRNA(Ala) + AMP + diphosphate. Functionally, catalyzes the attachment of alanine to tRNA(Ala) in a two-step reaction: alanine is first activated by ATP to form Ala-AMP and then transferred to the acceptor end of tRNA(Ala). Also edits incorrectly charged Ser-tRNA(Ala) and Gly-tRNA(Ala) via its editing domain. The sequence is that of Alanine--tRNA ligase from Vibrio vulnificus (strain YJ016).